We begin with the raw amino-acid sequence, 43 residues long: Protein PsbN (43 aa).

The chain crosses the membrane as a helical span at residues 5 to 27; it reads NLVAIFVSCLLVSLTGYALYTSF.

It belongs to the PsbN family.

It is found in the plastid. It localises to the chloroplast thylakoid membrane. In terms of biological role, may play a role in photosystem I and II biogenesis. In Ephedra sinica (Chinese ephedra), this protein is Protein PsbN.